A 334-amino-acid chain; its full sequence is N-acetyl-gamma-glutamyl-phosphate reductase (334 aa).

Cys154 is a catalytic residue.

Belongs to the NAGSA dehydrogenase family. Type 1 subfamily.

The protein localises to the cytoplasm. The catalysed reaction is N-acetyl-L-glutamate 5-semialdehyde + phosphate + NADP(+) = N-acetyl-L-glutamyl 5-phosphate + NADPH + H(+). It participates in amino-acid biosynthesis; L-arginine biosynthesis; N(2)-acetyl-L-ornithine from L-glutamate: step 3/4. Catalyzes the NADPH-dependent reduction of N-acetyl-5-glutamyl phosphate to yield N-acetyl-L-glutamate 5-semialdehyde. The protein is N-acetyl-gamma-glutamyl-phosphate reductase of Buchnera aphidicola subsp. Schizaphis graminum (strain Sg).